The following is a 719-amino-acid chain: Polyribonucleotide nucleotidyltransferase (719 aa).

Residues aspartate 491 and aspartate 497 each coordinate Mg(2+). The KH domain maps to proline 558 to isoleucine 617. The S1 motif domain occupies glycine 627–lysine 695.

Belongs to the polyribonucleotide nucleotidyltransferase family. The cofactor is Mg(2+).

The protein resides in the cytoplasm. It carries out the reaction RNA(n+1) + phosphate = RNA(n) + a ribonucleoside 5'-diphosphate. Involved in mRNA degradation. Catalyzes the phosphorolysis of single-stranded polyribonucleotides processively in the 3'- to 5'-direction. In Bordetella bronchiseptica (strain ATCC BAA-588 / NCTC 13252 / RB50) (Alcaligenes bronchisepticus), this protein is Polyribonucleotide nucleotidyltransferase.